The primary structure comprises 424 residues: uncharacterized protein (424 aa).

The protein belongs to the serpin family.

This is an uncharacterized protein from Methanosarcina acetivorans (strain ATCC 35395 / DSM 2834 / JCM 12185 / C2A).